The following is a 229-amino-acid chain: 3-isopropylmalate dehydratase small subunit (229 aa).

The disordered stretch occupies residues 208-229; that stretch reads KIESAREPDDDWTGPLADRGII.

It belongs to the LeuD family. LeuD type 1 subfamily. In terms of assembly, heterodimer of LeuC and LeuD.

The catalysed reaction is (2R,3S)-3-isopropylmalate = (2S)-2-isopropylmalate. The protein operates within amino-acid biosynthesis; L-leucine biosynthesis; L-leucine from 3-methyl-2-oxobutanoate: step 2/4. In terms of biological role, catalyzes the isomerization between 2-isopropylmalate and 3-isopropylmalate, via the formation of 2-isopropylmaleate. In Bifidobacterium longum subsp. infantis (strain ATCC 15697 / DSM 20088 / JCM 1222 / NCTC 11817 / S12), this protein is 3-isopropylmalate dehydratase small subunit.